A 181-amino-acid chain; its full sequence is Large ribosomal subunit protein uL6 (181 aa).

Belongs to the universal ribosomal protein uL6 family. As to quaternary structure, part of the 50S ribosomal subunit.

Its function is as follows. This protein binds to the 23S rRNA, and is important in its secondary structure. It is located near the subunit interface in the base of the L7/L12 stalk, and near the tRNA binding site of the peptidyltransferase center. In Coprothermobacter proteolyticus (strain ATCC 35245 / DSM 5265 / OCM 4 / BT), this protein is Large ribosomal subunit protein uL6.